The primary structure comprises 388 residues: S-adenosylmethionine synthase (388 aa).

H17 serves as a coordination point for ATP. D19 contacts Mg(2+). E45 serves as a coordination point for K(+). E58 and Q106 together coordinate L-methionine. The flexible loop stretch occupies residues 106–116 (QSAHISQGVDR). Residues 166-168 (DAK), D241, 247-248 (RK), A264, and K268 contribute to the ATP site. Residue D241 coordinates L-methionine. K272 contributes to the L-methionine binding site.

It belongs to the AdoMet synthase family. Homotetramer; dimer of dimers. Requires Mg(2+) as cofactor. K(+) is required as a cofactor.

The protein resides in the cytoplasm. It catalyses the reaction L-methionine + ATP + H2O = S-adenosyl-L-methionine + phosphate + diphosphate. It functions in the pathway amino-acid biosynthesis; S-adenosyl-L-methionine biosynthesis; S-adenosyl-L-methionine from L-methionine: step 1/1. Functionally, catalyzes the formation of S-adenosylmethionine (AdoMet) from methionine and ATP. The overall synthetic reaction is composed of two sequential steps, AdoMet formation and the subsequent tripolyphosphate hydrolysis which occurs prior to release of AdoMet from the enzyme. The protein is S-adenosylmethionine synthase of Paracoccus denitrificans (strain Pd 1222).